Consider the following 119-residue polypeptide: Large ribosomal subunit protein bL20 (119 aa).

It belongs to the bacterial ribosomal protein bL20 family.

Binds directly to 23S ribosomal RNA and is necessary for the in vitro assembly process of the 50S ribosomal subunit. It is not involved in the protein synthesizing functions of that subunit. The chain is Large ribosomal subunit protein bL20 from Streptococcus pyogenes serotype M1.